Reading from the N-terminus, the 168-residue chain is Small ribosomal subunit protein bS16 (168 aa).

The interval 110-168 is disordered; sequence LSEANNGPTAEAITEKKKKAREEKEAKEAAEKAAAEKAAAAEAEASEEAPAEEAASEEA. Positions 129-144 are enriched in basic and acidic residues; that stretch reads AREEKEAKEAAEKAAA. Residues 153–168 are compositionally biased toward acidic residues; that stretch reads EASEEAPAEEAASEEA.

Belongs to the bacterial ribosomal protein bS16 family.

The polypeptide is Small ribosomal subunit protein bS16 (Corynebacterium efficiens (strain DSM 44549 / YS-314 / AJ 12310 / JCM 11189 / NBRC 100395)).